A 268-amino-acid polypeptide reads, in one-letter code: Nickel import ATP-binding protein NikE (268 aa).

Residues 4-252 form the ABC transporter domain; the sequence is LNVSGLSHHY…SSDAGRVLQN (249 aa). 45-52 is a binding site for ATP; the sequence is GRSGCGKS.

Belongs to the ABC transporter superfamily. Nickel importer (TC 3.A.1.5.3) family. As to quaternary structure, the complex is composed of two ATP-binding proteins (NikD and NikE), two transmembrane proteins (NikB and NikC) and a solute-binding protein (NikA).

Its subcellular location is the cell inner membrane. It catalyses the reaction Ni(2+)(out) + ATP + H2O = Ni(2+)(in) + ADP + phosphate + H(+). Functionally, part of the ABC transporter complex NikABCDE involved in nickel import. Responsible for energy coupling to the transport system. This chain is Nickel import ATP-binding protein NikE, found in Shigella sonnei (strain Ss046).